The following is a 167-amino-acid chain: MRCGPLCRFLWLWPYLSCVEAVPIRKVQDDTKTLIKTIVARINDISHTQSVSSKQRVAGLDFIPGLQPVLSLSRMDQTLAIYQQILNSLHSRNVVQISNDLENLRDLLHLLASSKSCPLPRARGLETFESLGGVLEASLYSTEVVALNRLQAALQDMLRRLDLSPGC.

An N-terminal signal peptide occupies residues 1 to 21; that stretch reads MRCGPLCRFLWLWPYLSCVEA. A disulfide bond links cysteine 117 and cysteine 167.

Belongs to the leptin family.

The protein resides in the secreted. Functionally, key player in the regulation of energy balance and body weight control. Once released into the circulation, has central and peripheral effects by binding LEPR, found in many tissues, which results in the activation of several major signaling pathways. In the hypothalamus, acts as an appetite-regulating factor that induces a decrease in food intake and an increase in energy consumption by inducing anorexinogenic factors and suppressing orexigenic neuropeptides, also regulates bone mass and secretion of hypothalamo-pituitary-adrenal hormones. In the periphery, increases basal metabolism, influences reproductive function, regulates pancreatic beta-cell function and insulin secretion, is pro-angiogenic for endothelial cell and affects innate and adaptive immunity. In the arcuate nucleus of the hypothalamus, activates by depolarization POMC neurons inducing FOS and SOCS3 expression to release anorexigenic peptides and inhibits by hyperpolarization NPY neurons inducing SOCS3 with a consequent reduction on release of orexigenic peptides. In addition to its known satiety inducing effect, has a modulatory role in nutrient absorption. In the intestine, reduces glucose absorption by enterocytes by activating PKC and leading to a sequential activation of p38, PI3K and ERK signaling pathways which exerts an inhibitory effect on glucose absorption. Acts as a growth factor on certain tissues, through the activation of different signaling pathways increases expression of genes involved in cell cycle regulation such as CCND1, via JAK2-STAT3 pathway, or VEGFA, via MAPK1/3 and PI3K-AKT1 pathways. May also play an apoptotic role via JAK2-STAT3 pathway and up-regulation of BIRC5 expression. Pro-angiogenic, has mitogenic activity on vascular endothelial cells and plays a role in matrix remodeling by regulating the expression of matrix metalloproteinases (MMPs) and tissue inhibitors of metalloproteinases (TIMPs). In innate immunity, modulates the activity and function of neutrophils by increasing chemotaxis and the secretion of oxygen radicals. Increases phagocytosis by macrophages and enhances secretion of pro-inflammatory mediators. Increases cytotoxic ability of NK cells. Plays a pro-inflammatory role, in synergy with IL1B, by inducing NOS2 which promotes the production of IL6, IL8 and Prostaglandin E2, through a signaling pathway that involves JAK2, PI3K, MAP2K1/MEK1 and MAPK14/p38. In adaptive immunity, promotes the switch of memory T-cells towards T helper-1 cell immune responses. Increases CD4(+)CD25(-) T-cell proliferation and reduces autophagy during TCR (T-cell receptor) stimulation, through MTOR signaling pathway activation and BCL2 up-regulation. This chain is Leptin (LEP), found in Canis lupus familiaris (Dog).